A 284-amino-acid polypeptide reads, in one-letter code: Bifunctional protein FolD (284 aa).

Residue 166 to 168 coordinates NADP(+); the sequence is GAS.

This sequence belongs to the tetrahydrofolate dehydrogenase/cyclohydrolase family. In terms of assembly, homodimer.

The enzyme catalyses (6R)-5,10-methylene-5,6,7,8-tetrahydrofolate + NADP(+) = (6R)-5,10-methenyltetrahydrofolate + NADPH. It catalyses the reaction (6R)-5,10-methenyltetrahydrofolate + H2O = (6R)-10-formyltetrahydrofolate + H(+). It participates in one-carbon metabolism; tetrahydrofolate interconversion. Catalyzes the oxidation of 5,10-methylenetetrahydrofolate to 5,10-methenyltetrahydrofolate and then the hydrolysis of 5,10-methenyltetrahydrofolate to 10-formyltetrahydrofolate. The polypeptide is Bifunctional protein FolD (Legionella pneumophila (strain Paris)).